The chain runs to 495 residues: UDP-N-acetylmuramoyl-L-alanyl-D-glutamate--2,6-diaminopimelate ligase (495 aa).

Ser-29 contacts UDP-N-acetyl-alpha-D-muramoyl-L-alanyl-D-glutamate. Residue Gly-111–Ser-117 participates in ATP binding. UDP-N-acetyl-alpha-D-muramoyl-L-alanyl-D-glutamate contacts are provided by residues Thr-153 to Thr-154, Ser-180, Gln-186, and Arg-188. Lys-220 is subject to N6-carboxylysine. Meso-2,6-diaminopimelate is bound by residues Arg-384, Asp-408–Arg-411, Gly-459, and Glu-463. The Meso-diaminopimelate recognition motif signature appears at Asp-408–Arg-411.

Belongs to the MurCDEF family. MurE subfamily. Mg(2+) is required as a cofactor. Post-translationally, carboxylation is probably crucial for Mg(2+) binding and, consequently, for the gamma-phosphate positioning of ATP.

It is found in the cytoplasm. It catalyses the reaction UDP-N-acetyl-alpha-D-muramoyl-L-alanyl-D-glutamate + meso-2,6-diaminopimelate + ATP = UDP-N-acetyl-alpha-D-muramoyl-L-alanyl-gamma-D-glutamyl-meso-2,6-diaminopimelate + ADP + phosphate + H(+). It functions in the pathway cell wall biogenesis; peptidoglycan biosynthesis. In terms of biological role, catalyzes the addition of meso-diaminopimelic acid to the nucleotide precursor UDP-N-acetylmuramoyl-L-alanyl-D-glutamate (UMAG) in the biosynthesis of bacterial cell-wall peptidoglycan. The polypeptide is UDP-N-acetylmuramoyl-L-alanyl-D-glutamate--2,6-diaminopimelate ligase (Xanthomonas campestris pv. campestris (strain 8004)).